The sequence spans 473 residues: Photosystem II CP43 reaction center protein (473 aa).

Positions 1-14 (MKTLYSLRRFYPVE) are excised as a propeptide. Thr15 is subject to N-acetylthreonine. The residue at position 15 (Thr15) is a Phosphothreonine. The next 5 membrane-spanning stretches (helical) occupy residues 69–93 (LFEV…PHLA), 134–155 (LLGP…KDRN), 178–200 (KALY…RKIT), 255–275 (KPFA…LSYS), and 291–312 (WFNN…ASQA). [CaMn4O5] cluster is bound at residue Glu367. Residues 447–471 (RARAAAAGFEKGIDRDFEPVLSMTP) form a helical membrane-spanning segment.

It belongs to the PsbB/PsbC family. PsbC subfamily. PSII is composed of 1 copy each of membrane proteins PsbA, PsbB, PsbC, PsbD, PsbE, PsbF, PsbH, PsbI, PsbJ, PsbK, PsbL, PsbM, PsbT, PsbX, PsbY, PsbZ, Psb30/Ycf12, at least 3 peripheral proteins of the oxygen-evolving complex and a large number of cofactors. It forms dimeric complexes. Requires Binds multiple chlorophylls and provides some of the ligands for the Ca-4Mn-5O cluster of the oxygen-evolving complex. It may also provide a ligand for a Cl- that is required for oxygen evolution. PSII binds additional chlorophylls, carotenoids and specific lipids. as cofactor.

It is found in the plastid. It localises to the chloroplast thylakoid membrane. Its function is as follows. One of the components of the core complex of photosystem II (PSII). It binds chlorophyll and helps catalyze the primary light-induced photochemical processes of PSII. PSII is a light-driven water:plastoquinone oxidoreductase, using light energy to abstract electrons from H(2)O, generating O(2) and a proton gradient subsequently used for ATP formation. The protein is Photosystem II CP43 reaction center protein of Helianthus annuus (Common sunflower).